A 214-amino-acid chain; its full sequence is rRNA N(6)-adenosine-methyltransferase metl-5 (214 aa).

S-adenosyl-L-methionine is bound by residues Gln-25, Thr-28, Gly-55, Cys-58, Asp-78, and Asp-106 to Ile-107.

This sequence belongs to the methyltransferase superfamily. PrmA family. Heterodimer; heterodimerizes with TRMT112/C04H5.1.

The catalysed reaction is adenosine in rRNA + S-adenosyl-L-methionine = N(6)-methyladenosine in rRNA + S-adenosyl-L-homocysteine + H(+). Its function is as follows. Catalytic subunit of a heterodimer with TRMT112/C04H5.1, which specifically methylates the 6th position of adenine in position 1717 of 18S rRNA. This Caenorhabditis elegans protein is rRNA N(6)-adenosine-methyltransferase metl-5.